An 88-amino-acid chain; its full sequence is MGTARFLSAVLLLSVLLMVTFPALLSAEYHDGRVDICSLPSDSGDCLRFFEMWYFDGTTCTKFVYGGCGGNDNRFPTEKACMKRCAKA.

Residues 1-27 (MGTARFLSAVLLLSVLLMVTFPALLSA) form the signal peptide. Positions 28–33 (EYHDGR) are excised as a propeptide. Residues 37 to 85 (CSLPSDSGDCLRFFEMWYFDGTTCTKFVYGGCGGNDNRFPTEKACMKRC) enclose the BPTI/Kunitz inhibitor domain. 3 disulfide bridges follow: Cys37/Cys85, Cys46/Cys68, and Cys60/Cys81.

Belongs to the venom Kunitz-type family. 03 (sub-Kunitz) subfamily. As to expression, expressed by the venom gland.

Its subcellular location is the secreted. Its function is as follows. Serine protease inhibitor that inhibits trypsin at a molar ratio of 1:1. The chain is Kunitz-type U15-theraphotoxin-Hs1g from Cyriopagopus schmidti (Chinese bird spider).